A 385-amino-acid polypeptide reads, in one-letter code: Succinyl-diaminopimelate desuccinylase (385 aa).

H73 serves as a coordination point for Zn(2+). The active site involves D75. D106 serves as a coordination point for Zn(2+). E141 acts as the Proton acceptor in catalysis. Residues E142, E170, and H359 each contribute to the Zn(2+) site.

Belongs to the peptidase M20A family. DapE subfamily. As to quaternary structure, homodimer. Zn(2+) is required as a cofactor. Requires Co(2+) as cofactor.

It carries out the reaction N-succinyl-(2S,6S)-2,6-diaminopimelate + H2O = (2S,6S)-2,6-diaminopimelate + succinate. It participates in amino-acid biosynthesis; L-lysine biosynthesis via DAP pathway; LL-2,6-diaminopimelate from (S)-tetrahydrodipicolinate (succinylase route): step 3/3. In terms of biological role, catalyzes the hydrolysis of N-succinyl-L,L-diaminopimelic acid (SDAP), forming succinate and LL-2,6-diaminopimelate (DAP), an intermediate involved in the bacterial biosynthesis of lysine and meso-diaminopimelic acid, an essential component of bacterial cell walls. This Methylorubrum extorquens (strain CM4 / NCIMB 13688) (Methylobacterium extorquens) protein is Succinyl-diaminopimelate desuccinylase.